Consider the following 404-residue polypeptide: Probable tRNA sulfurtransferase (404 aa).

The region spanning 61–166 (EAVSERLKDV…SGYSYIMCDE (106 aa)) is the THUMP domain. Residues 184–185 (LL), 209–210 (HF), arginine 266, glycine 288, and glutamine 297 each bind ATP.

Belongs to the ThiI family.

The protein localises to the cytoplasm. It catalyses the reaction [ThiI sulfur-carrier protein]-S-sulfanyl-L-cysteine + a uridine in tRNA + 2 reduced [2Fe-2S]-[ferredoxin] + ATP + H(+) = [ThiI sulfur-carrier protein]-L-cysteine + a 4-thiouridine in tRNA + 2 oxidized [2Fe-2S]-[ferredoxin] + AMP + diphosphate. It carries out the reaction [ThiS sulfur-carrier protein]-C-terminal Gly-Gly-AMP + S-sulfanyl-L-cysteinyl-[cysteine desulfurase] + AH2 = [ThiS sulfur-carrier protein]-C-terminal-Gly-aminoethanethioate + L-cysteinyl-[cysteine desulfurase] + A + AMP + 2 H(+). Its pathway is cofactor biosynthesis; thiamine diphosphate biosynthesis. Functionally, catalyzes the ATP-dependent transfer of a sulfur to tRNA to produce 4-thiouridine in position 8 of tRNAs, which functions as a near-UV photosensor. Also catalyzes the transfer of sulfur to the sulfur carrier protein ThiS, forming ThiS-thiocarboxylate. This is a step in the synthesis of thiazole, in the thiamine biosynthesis pathway. The sulfur is donated as persulfide by IscS. The polypeptide is Probable tRNA sulfurtransferase (Bacillus cereus (strain ATCC 14579 / DSM 31 / CCUG 7414 / JCM 2152 / NBRC 15305 / NCIMB 9373 / NCTC 2599 / NRRL B-3711)).